Reading from the N-terminus, the 228-residue chain is Probable transcriptional regulatory protein SilR (228 aa).

One can recognise a Response regulatory domain in the interval 2–116; the sequence is KILIVEDDIK…ELLARVRTLL (115 aa). D51 is subject to 4-aspartylphosphate. A DNA-binding region (ompR/PhoB-type) is located at residues 125–225; the sequence is ESQLKVADLS…VRGVGYMLEI (101 aa).

Phosphorylated by SilS.

The protein localises to the cytoplasm. Component of the sil cation-efflux system that confers resistance to silver. Probable member of a two-component regulatory system SilS/SilR. The polypeptide is Probable transcriptional regulatory protein SilR (silR) (Salmonella typhimurium).